The chain runs to 3859 residues: Transformation/transcription domain-associated protein (3859 aa).

Ala2 bears the N-acetylalanine mark. A compositionally biased stretch (pro residues) spans 491 to 526 (PAAPGPAPSPAPVPAPPPPPPPPPPATPVTPAPVPP). Positions 491-541 (PAAPGPAPSPAPVPAPPPPPPPPPPATPVTPAPVPPFEKQGEKDKEDKQTF) are disordered. The span at 529-539 (KQGEKDKEDKQ) shows a compositional bias: basic and acidic residues. Ser1628 carries the post-translational modification Phosphoserine. The interval 2010 to 2388 (SEVVIKWELQ…SPMAANQTPT (379 aa)) is interaction with TP53. The segment at 2023–2044 (DQQPDSDMDPNSSGEGVNSVSS) is disordered. Over residues 2033–2044 (NSSGEGVNSVSS) the composition is skewed to low complexity. The Bipartite nuclear localization signal signature appears at 2047–2062 (KRGLSVDSAQEVKRFR). Phosphoserine is present on residues Ser2051 and Ser2077. A Glycyl lysine isopeptide (Lys-Gly) (interchain with G-Cter in SUMO2) cross-link involves residue Lys2543. Residues 2543–2554 (KQEPRERENSES) are compositionally biased toward basic and acidic residues. Positions 2543–2578 (KQEPRERENSESKEEDVEIDIELAPGDQTSTPKTKE) are disordered. Positions 2692–3275 (VLKYLGKTHN…YFPIRTLYLT (584 aa)) constitute an FAT domain. Lys3078 carries the post-translational modification N6-acetyllysine. The 324-residue stretch at 3500–3823 (MPRVEIVQKH…AVTAIMTRLH (324 aa)) folds into the PI3K/PI4K catalytic domain. Positions 3506–3512 (VQKHNTA) are G-loop. The segment at 3687–3695 (HLNRLNPEM) is catalytic loop. The segment at 3707 to 3732 (VAYFRFDINDATGDLDANRPVPFRLT) is activation loop. The FATC domain occupies 3827 to 3859 (QFEGGESKVNTLVAAANSLDNLCRMDPAWHPWL).

Belongs to the PI3/PI4-kinase family. TRA1 subfamily. As to quaternary structure, interacts with MYC, E2F1 and E2F4 transcription factors. Interacts directly with p53/TP53. Interacts with GCN5L2. Component of various HAT complexes. Component of the PCAF complex, at least composed of TADA2L/ADA2, SUPT3H, TADA3L/ADA3, TAF5L/PAF65-beta, TAF6L/PAF65-alpha, TAF10/TAFII30, TAF12/TAFII20, TAF9/TAFII31 and TRRAP. Component of the TFTC-HAT complex, at least composed of TAF5L, TAF6L, TADA3L, SUPT3H/SPT3, TAF2/TAFII150, TAF4/TAFII135, TAF5/TAFII100, GCN5L2/GCN5, TAF10 and TRRAP. Component of the NuA4 histone acetyltransferase complex which contains the catalytic subunit KAT5/TIP60 and the subunits EP400, TRRAP/PAF400, BRD8/SMAP, EPC1, DMAP1/DNMAP1, RUVBL1/TIP49, RUVBL2, ING3, actin, ACTL6A/BAF53A, MORF4L1/MRG15, MORF4L2/MRGX, MRGBP, YEATS4/GAS41, VPS72/YL1 and MEAF6. Component of the STAGA complex, at least composed of SUPT3H, GCN5L2, SUPT7L, TAF5L, TAF6L, TADA3L, TAD1L, TAF10, TAF12, TRRAP and TAF9. The STAGA core complex is associated with a subcomplex required for histone deubiquitination composed of ATXN7L3, ENY2 and USP22. Component of the BAF53 complex, at least composed of BAF53A, RUVBL1, SMARCA4/BRG1, and TRRAP, which preferentially acetylates histone H4 (and H2A) within nucleosomes. Interacts with NPAT. Interaction with TELO2 and TTI1. Component of a SWR1-like complex.

It localises to the nucleus. Functionally, adapter protein, which is found in various multiprotein chromatin complexes with histone acetyltransferase activity (HAT), which gives a specific tag for epigenetic transcription activation. Component of the NuA4 histone acetyltransferase complex which is responsible for acetylation of nucleosomal histones H4 and H2A. Plays a central role in MYC transcription activation, and also participates in cell transformation by MYC. Required for p53/TP53-, E2F1- and E2F4-mediated transcription activation. Also involved in transcription activation mediated by the adenovirus E1A, a viral oncoprotein that deregulates transcription of key genes. Probably acts by linking transcription factors such as E1A, MYC or E2F1 to HAT complexes such as STAGA thereby allowing transcription activation. Probably not required in the steps following histone acetylation in processes of transcription activation. May be required for the mitotic checkpoint and normal cell cycle progression. Component of a SWR1-like complex that specifically mediates the removal of histone H2A.Z/H2AZ1 from the nucleosome. May play a role in the formation and maintenance of the auditory system. The polypeptide is Transformation/transcription domain-associated protein (TRRAP) (Homo sapiens (Human)).